Reading from the N-terminus, the 589-residue chain is Aspartate--tRNA(Asp/Asn) ligase (589 aa).

Glu-176 is an L-aspartate binding site. The interval 200–203 (QLFK) is aspartate. Residue Arg-222 participates in L-aspartate binding. ATP contacts are provided by residues 222–224 (RDE) and Gln-231. His-450 contacts L-aspartate. Position 484 (Glu-484) interacts with ATP. L-aspartate is bound at residue Arg-491. 536–539 (GLDR) provides a ligand contact to ATP.

This sequence belongs to the class-II aminoacyl-tRNA synthetase family. Type 1 subfamily. In terms of assembly, homodimer.

The protein resides in the cytoplasm. It carries out the reaction tRNA(Asx) + L-aspartate + ATP = L-aspartyl-tRNA(Asx) + AMP + diphosphate. Functionally, aspartyl-tRNA synthetase with relaxed tRNA specificity since it is able to aspartylate not only its cognate tRNA(Asp) but also tRNA(Asn). Reaction proceeds in two steps: L-aspartate is first activated by ATP to form Asp-AMP and then transferred to the acceptor end of tRNA(Asp/Asn). The protein is Aspartate--tRNA(Asp/Asn) ligase of Bacillus cytotoxicus (strain DSM 22905 / CIP 110041 / 391-98 / NVH 391-98).